Here is a 285-residue protein sequence, read N- to C-terminus: Probable endonuclease 4 (285 aa).

Zn(2+) is bound by residues His69, His109, Glu145, Asp179, His182, His216, Asp229, His231, and Glu261.

This sequence belongs to the AP endonuclease 2 family. Zn(2+) is required as a cofactor.

It carries out the reaction Endonucleolytic cleavage to 5'-phosphooligonucleotide end-products.. Its function is as follows. Endonuclease IV plays a role in DNA repair. It cleaves phosphodiester bonds at apurinic or apyrimidinic (AP) sites, generating a 3'-hydroxyl group and a 5'-terminal sugar phosphate. The chain is Probable endonuclease 4 from Citrobacter koseri (strain ATCC BAA-895 / CDC 4225-83 / SGSC4696).